Reading from the N-terminus, the 836-residue chain is Translation initiation factor IF-2 (836 aa).

Residues 1–233 (MSDTDGKKPL…RSLAAMKRKQ (233 aa)) are disordered. Polar residues predominate over residues 18-27 (SGQVKQSFSH). Residues 50–60 (SGSSTTTSSPS) are compositionally biased toward low complexity. Residues 88–156 (KLREVEDAKR…AARRAEEAKR (69 aa)) show a composition bias toward basic and acidic residues. A compositionally biased stretch (low complexity) spans 167–176 (PAESRASAPP). Residues 185–206 (SRKEREREADRDRTTKKDDSRR) are compositionally biased toward basic and acidic residues. The tr-type G domain maps to 333-501 (PRPPIITIMG…NIALQAEILD (169 aa)). The interval 342–349 (GHVDHGKT) is G1. Residue 342 to 349 (GHVDHGKT) participates in GTP binding. The segment at 367-371 (GITQH) is G2. The segment at 389–392 (DTPG) is G3. Residues 389–393 (DTPGH) and 443–446 (NKID) contribute to the GTP site. A G4 region spans residues 443-446 (NKID). The G5 stretch occupies residues 479–481 (SAK).

Belongs to the TRAFAC class translation factor GTPase superfamily. Classic translation factor GTPase family. IF-2 subfamily.

The protein resides in the cytoplasm. Functionally, one of the essential components for the initiation of protein synthesis. Protects formylmethionyl-tRNA from spontaneous hydrolysis and promotes its binding to the 30S ribosomal subunits. Also involved in the hydrolysis of GTP during the formation of the 70S ribosomal complex. The polypeptide is Translation initiation factor IF-2 (Cereibacter sphaeroides (strain ATCC 17023 / DSM 158 / JCM 6121 / CCUG 31486 / LMG 2827 / NBRC 12203 / NCIMB 8253 / ATH 2.4.1.) (Rhodobacter sphaeroides)).